Here is a 311-residue protein sequence, read N- to C-terminus: Aldose reductase B (311 aa).

13–23 contacts NADP(+); sequence DIHHIPMIGLG. Residue Tyr54 is the Proton donor of the active site. His116 contacts substrate. Residue 219-273 participates in NADP(+) binding; sequence SPLGQGKCDLLSNETLKSIADKHNKTVANVIFKWLNQRGIVTIPKSSNPARIIEN.

This sequence belongs to the aldo/keto reductase family.

The enzyme catalyses an alditol + NAD(+) = an aldose + NADH + H(+). The catalysed reaction is an alditol + NADP(+) = an aldose + NADPH + H(+). Its function is as follows. Catalyzes the NADPH-dependent reduction of a wide variety of carbonyl-containing compounds to their corresponding alcohols with a broad range of catalytic efficiencies. In Dictyostelium discoideum (Social amoeba), this protein is Aldose reductase B (alrB).